A 1071-amino-acid chain; its full sequence is Carbamoyl phosphate synthase large chain (1071 aa).

The carboxyphosphate synthetic domain stretch occupies residues 1–399 (MPKREDIKKV…SLLKAFKSLD (399 aa)). ATP-binding residues include Arg-129, Arg-169, Gly-175, Gly-176, Glu-208, Val-210, Glu-215, Gly-241, Val-242, His-243, Gln-284, and Glu-296. The ATP-grasp 1 domain occupies 133 to 325 (KETMLRIGEK…IARVTAKIAI (193 aa)). Gln-284, Glu-296, and Asn-298 together coordinate Mg(2+). Mn(2+)-binding residues include Gln-284, Glu-296, and Asn-298. Positions 400-540 (IDNQLGNKHW…YSTYEDSCET (141 aa)) are oligomerization domain. The carbamoyl phosphate synthetic domain stretch occupies residues 541–932 (NATTDKKKIL…YKAELAADNV (392 aa)). The ATP-grasp 2 domain maps to 673 to 864 (YILMKELGVP…LAKIAAKVIA (192 aa)). ATP-binding residues include Arg-709, Asp-748, Leu-750, Glu-755, Gly-780, Val-781, His-782, Ser-783, Gln-823, and Glu-835. Positions 823, 835, and 837 each coordinate Mg(2+). Mn(2+)-binding residues include Gln-823, Glu-835, and Asn-837. An MGS-like domain is found at 931 to 1071 (NVLPLTGKVF…INEYHKEMEN (141 aa)). The interval 933–1071 (LPLTGKVFLS…INEYHKEMEN (139 aa)) is allosteric domain.

It belongs to the CarB family. As to quaternary structure, composed of two chains; the small (or glutamine) chain promotes the hydrolysis of glutamine to ammonia, which is used by the large (or ammonia) chain to synthesize carbamoyl phosphate. Tetramer of heterodimers (alpha,beta)4. Mg(2+) is required as a cofactor. Mn(2+) serves as cofactor.

It catalyses the reaction hydrogencarbonate + L-glutamine + 2 ATP + H2O = carbamoyl phosphate + L-glutamate + 2 ADP + phosphate + 2 H(+). The enzyme catalyses hydrogencarbonate + NH4(+) + 2 ATP = carbamoyl phosphate + 2 ADP + phosphate + 2 H(+). The protein operates within amino-acid biosynthesis; L-arginine biosynthesis; carbamoyl phosphate from bicarbonate: step 1/1. It participates in pyrimidine metabolism; UMP biosynthesis via de novo pathway; (S)-dihydroorotate from bicarbonate: step 1/3. Functionally, large subunit of the glutamine-dependent carbamoyl phosphate synthetase (CPSase). CPSase catalyzes the formation of carbamoyl phosphate from the ammonia moiety of glutamine, carbonate, and phosphate donated by ATP, constituting the first step of 2 biosynthetic pathways, one leading to arginine and/or urea and the other to pyrimidine nucleotides. The large subunit (synthetase) binds the substrates ammonia (free or transferred from glutamine from the small subunit), hydrogencarbonate and ATP and carries out an ATP-coupled ligase reaction, activating hydrogencarbonate by forming carboxy phosphate which reacts with ammonia to form carbamoyl phosphate. The chain is Carbamoyl phosphate synthase large chain from Methanosarcina barkeri (strain Fusaro / DSM 804).